Consider the following 344-residue polypeptide: Tripartite motif-containing protein 44 (344 aa).

Residues 69–165 (PPASGDDALP…ETEAESEFDP (97 aa)) are disordered. A compositionally biased stretch (acidic residues) spans 88–165 (EGEVESEVGE…ETEAESEFDP (78 aa)). The segment at 174 to 215 (VAKRKCPDHGLDLSTYCQEDRQLICVLCPVIGAHRGHQLSTL) adopts a B box-type zinc-finger fold. C179, H182, C201, and H207 together coordinate Zn(2+). Positions 290–325 (AHVTEILADIQSHMDRLMTQMAQAKEQLDTSNESAE) form a coiled coil. A disordered region spans residues 309 to 344 (QMAQAKEQLDTSNESAEPKAEGDEEGPSGASEEEDT). Positions 330–344 (GDEEGPSGASEEEDT) are enriched in acidic residues. Phosphoserine is present on residues S336 and S339.

In terms of assembly, interacts (via coiled coil) with TRIM17 (via coiled coil).

Its function is as follows. May play a role in the process of differentiation and maturation of neuronal cells. May regulate the activity of TRIM17. Is a negative regulator of PAX6 expression. The protein is Tripartite motif-containing protein 44 (Trim44) of Rattus norvegicus (Rat).